The sequence spans 462 residues: Keratin, type I cytoskeletal 28 (462 aa).

Residues 1 to 26 (MSLRFSGGSRHVGIQSGSLRPPSGGA) form a disordered region. Positions 1-83 (MSLRFSGGSR…GSEGGLLSGN (83 aa)) are head. Residues 84–119 (EKVTMQNLNNRLASYLDNVKALEEANSELERKIKTW) are coil 1A. The IF rod domain maps to 84 to 399 (EKVTMQNLNN…RLIDGDENSC (316 aa)). Positions 120–141 (HEKYGPGSCRGLDRDYSKYHLT) are linker 1. The segment at 142 to 233 (IEDLKSKIIS…KNHEEEMKVL (92 aa)) is coil 1B. A linker 12 region spans residues 234-256 (QCAAGGNVNVEMNAAPGVDLTVL). A coil 2 region spans residues 257–395 (LNNMRAEYEA…ETYCRLIDGD (139 aa)). The tail stretch occupies residues 396-462 (ENSCSVSKGF…NGKAEQRVPF (67 aa)).

It belongs to the intermediate filament family. Heterotetramer of two type I and two type II keratins. In terms of tissue distribution, in the hair follicle and bulb, uniformly expressed in all three layers of the inner root sheath (the Henle layer, the Huxley layer and the cuticle) and observed in matrix cells (at protein level).

The protein localises to the cytoplasm. Its function is as follows. Essential for the proper assembly of types I and II keratin protein complexes and the formation of keratin intermediate filaments in the inner root sheath (irs). The protein is Keratin, type I cytoskeletal 28 of Mus musculus (Mouse).